The primary structure comprises 285 residues: Neuralized-like protein 2 (285 aa).

The interval 1 to 20 (MAAASEPVDSGALWGLERPE) is disordered. The 222-residue stretch at 23–244 (PTRFHRVHGA…STKSVRLVQL (222 aa)) folds into the NHR domain. One can recognise an SOCS box domain in the interval 250–285 (SLQTLCRLVIQRSMVHRLAIDGLHLPKELKDFCKYE).

In terms of assembly, probable component the ECS(NEURL2) E3 ubiquitin-protein ligase complex consisting of ELOB/Elongin B, ELOC/Elongin C, CUL5, RBX1 and NEURL2. Interacts with CTNNB1. In terms of tissue distribution, expressed specifically in skeletal and cardiac muscles.

It is found in the cytoplasm. It participates in protein modification; protein ubiquitination. In terms of biological role, plays an important role in the process of myofiber differentiation and maturation. Probable substrate-recognition component of a SCF-like ECS (Elongin BC-CUL2/5-SOCS-box protein) E3 ubiquitin-protein ligase complex, which mediates the ubiquitination of proteins. Probably contributes to catalysis through recognition and positioning of the substrate and the ubiquitin-conjugating enzyme. During myogenesis, controls the ubiquitination and degradation of the specific pool of CTNNB1/beta-catenin located at the sarcolemma. The polypeptide is Neuralized-like protein 2 (NEURL2) (Homo sapiens (Human)).